The chain runs to 1211 residues: A disintegrin and metalloproteinase with thrombospondin motifs 2 (1211 aa).

The signal sequence occupies residues methionine 1–proline 29. Positions proline 30–serine 253 are excised as a propeptide. Asparagine 112 and asparagine 251 each carry an N-linked (GlcNAc...) asparagine glycan. The Peptidase M12B domain maps to tyrosine 266–proline 470. Intrachain disulfides connect cysteine 343/cysteine 392, cysteine 386/cysteine 465, cysteine 425/cysteine 451, cysteine 492/cysteine 517, cysteine 503/cysteine 526, cysteine 512/cysteine 545, cysteine 539/cysteine 550, cysteine 573/cysteine 610, cysteine 577/cysteine 615, and cysteine 588/cysteine 600. Histidine 408 contacts Zn(2+). Residue glutamate 409 is part of the active site. 2 residues coordinate Zn(2+): histidine 412 and histidine 418. Positions glutamine 480–arginine 560 constitute a Disintegrin domain. Residues aspartate 561–proline 616 form the TSP type-1 1 domain. A Cell attachment site motif is present at residues arginine 691–aspartate 693. The segment at lysine 723–glutamate 851 is spacer. TSP type-1 domains are found at residues valine 854 to glutamate 912, serine 914 to serine 971, and cysteine 975 to proline 1029. N-linked (GlcNAc...) asparagine glycans are attached at residues asparagine 949 and asparagine 993. 3 disulfide bridges follow: cysteine 987–cysteine 1023, cysteine 991–cysteine 1028, and cysteine 1002–cysteine 1012. Asparagine 1031 carries an N-linked (GlcNAc...) asparagine glycan. In terms of domain architecture, PLAC spans serine 1059 to asparagine 1097. N-linked (GlcNAc...) asparagine glycosylation is found at asparagine 1098, asparagine 1145, and asparagine 1150. The segment at leucine 1170–arginine 1191 is disordered.

As to quaternary structure, may belong to a multimeric complex. Binds specifically to collagen type XIV. Requires Zn(2+) as cofactor. Post-translationally, the precursor is cleaved by a furin endopeptidase. In terms of processing, glycosylated. Can be O-fucosylated by POFUT2 on a serine or a threonine residue found within the consensus sequence C1-X(2)-(S/T)-C2-G of the TSP type-1 repeat domains where C1 and C2 are the first and second cysteine residue of the repeat, respectively. Fucosylated repeats can then be further glycosylated by the addition of a beta-1,3-glucose residue by the glucosyltransferase, B3GALTL. Fucosylation mediates the efficient secretion of ADAMTS family members. Can also be C-glycosylated with one or two mannose molecules on tryptophan residues within the consensus sequence W-X-X-W of the TPRs, and N-glycosylated. These other glycosylations can also facilitate secretion. In terms of tissue distribution, expressed at high level in skin, bone, tendon and aorta and at low levels in thymus and brain.

It is found in the secreted. It localises to the extracellular space. The protein localises to the extracellular matrix. The enzyme catalyses Cleaves the N-propeptide of collagen chain alpha1(I) at Pro-|-Gln and of alpha1(II) and alpha2(I) at Ala-|-Gln.. Its function is as follows. Cleaves the propeptides of type I and II collagen prior to fibril assembly. Does not act on type III collagen. Cleaves lysyl oxidase LOX at a site downstream of its propeptide cleavage site to produce a short LOX form with reduced collagen-binding activity. The polypeptide is A disintegrin and metalloproteinase with thrombospondin motifs 2 (ADAMTS2) (Homo sapiens (Human)).